The following is a 474-amino-acid chain: Cysteine--tRNA ligase (474 aa).

Zn(2+) is bound at residue Cys-28. The 'HIGH' region motif lies at 30–40 (ITVYDLCHLGH). Cys-209, His-234, and Glu-238 together coordinate Zn(2+). Residues 269 to 273 (KMSKS) carry the 'KMSKS' region motif. Lys-272 is a binding site for ATP.

Belongs to the class-I aminoacyl-tRNA synthetase family. Monomer. Zn(2+) serves as cofactor.

The protein resides in the cytoplasm. It carries out the reaction tRNA(Cys) + L-cysteine + ATP = L-cysteinyl-tRNA(Cys) + AMP + diphosphate. In Blochmanniella floridana, this protein is Cysteine--tRNA ligase.